A 539-amino-acid polypeptide reads, in one-letter code: Putative dimethylaniline monooxygenase [N-oxide-forming] 6 (539 aa).

FAD is bound by residues 9–13 (GAGVS), Glu-32, 40–41 (LW), and 61–62 (NS). 195 to 198 (SGSD) serves as a coordination point for NADP(+). Residues 518–538 (FYNLLKMLSFPLLLLAVTLTF) traverse the membrane as a helical segment.

Belongs to the FMO family. Requires FAD as cofactor.

The protein resides in the microsome membrane. The protein localises to the endoplasmic reticulum membrane. It catalyses the reaction N,N-dimethylaniline + NADPH + O2 + H(+) = N,N-dimethylaniline N-oxide + NADP(+) + H2O. Its function is as follows. It is probable that this protein is only produced in very small quantity or not at all as the gene coding for it seems to be unable to produce full-length transcripts. This is Putative dimethylaniline monooxygenase [N-oxide-forming] 6 (FMO6P) from Homo sapiens (Human).